The following is a 443-amino-acid chain: tRNA modification GTPase MnmE (443 aa).

3 residues coordinate (6S)-5-formyl-5,6,7,8-tetrahydrofolate: arginine 23, glutamate 82, and lysine 121. The region spanning 215-364 is the TrmE-type G domain; sequence GTSIVLAGHP…LKQFIQKWMQ (150 aa). Asparagine 225 provides a ligand contact to K(+). Residues 225 to 230, 244 to 250, and 269 to 272 each bind GTP; these read NVGKSS, TDIPGTT, and DSAG. Serine 229 contacts Mg(2+). Residues threonine 244, isoleucine 246, and threonine 249 each contribute to the K(+) site. Threonine 250 contacts Mg(2+). Lysine 443 is a binding site for (6S)-5-formyl-5,6,7,8-tetrahydrofolate.

It belongs to the TRAFAC class TrmE-Era-EngA-EngB-Septin-like GTPase superfamily. TrmE GTPase family. Homodimer. Heterotetramer of two MnmE and two MnmG subunits. The cofactor is K(+).

The protein localises to the cytoplasm. Its function is as follows. Exhibits a very high intrinsic GTPase hydrolysis rate. Involved in the addition of a carboxymethylaminomethyl (cmnm) group at the wobble position (U34) of certain tRNAs, forming tRNA-cmnm(5)s(2)U34. The sequence is that of tRNA modification GTPase MnmE from Chlamydia caviae (strain ATCC VR-813 / DSM 19441 / 03DC25 / GPIC) (Chlamydophila caviae).